The sequence spans 667 residues: E3 ubiquitin-protein ligase Midline-1 (667 aa).

The RING-type zinc finger occupies 10 to 60; it reads CPICLELFEDPLLLPCAHSLCFNCAHRILVSHCATNESVESITAFQCPTCR. Residues S92 and S96 each carry the phosphoserine modification. B box-type zinc fingers lie at residues 116 to 165 and 172 to 212; these read KVLC…IEPI and GLMC…VAAL. Residues C119, C122, C134, C137, C142, C145, H150, H159, C175, H178, C198, and H204 each coordinate Zn(2+). Residues 205 to 264 are a coiled coil; that stretch reads RDHQVAALSERYDKLKQNLESNLTNLIKRNTELETLLAKLIQTCQHVEVNASRQEAKLTE. The 60-residue stretch at 320-379 folds into the COS domain; sequence LKENDHARFLQTAKNITERVSMATASSQVLIPEINLNDTFDTFALDFSREKKLLECLDYL. The Fibronectin type-III domain occupies 381-484; that stretch reads APNPPTIREE…EPGKLKTNSQ (104 aa). The span at 471 to 485 shows a compositional bias: polar residues; the sequence is SRSSEPGKLKTNSQP. The tract at residues 471 to 524 is disordered; it reads SRSSEPGKLKTNSQPFKLDPKSAHRKLKVSHDNLTVERDESSSKKSHTPERFTS. Residues 482–659 form the B30.2/SPRY domain; that stretch reads NSQPFKLDPK…IITGLPIPDH (178 aa). Residues 499–520 are compositionally biased toward basic and acidic residues; it reads VSHDNLTVERDESSSKKSHTPE. The residue at position 511 (S511) is a Phosphoserine.

It belongs to the TRIM/RBCC family. Homodimer or heterodimer with MID2. Interacts with IGBP1. Interacts with TRIM16. In terms of processing, phosphorylated on serine and threonine residues. In terms of tissue distribution, in the fetus, highest expression found in kidney, followed by brain and lung. Expressed at low levels in fetal liver. In the adult, most abundant in heart, placenta and brain.

The protein localises to the cytoplasm. The protein resides in the cytoskeleton. It localises to the spindle. It carries out the reaction S-ubiquitinyl-[E2 ubiquitin-conjugating enzyme]-L-cysteine + [acceptor protein]-L-lysine = [E2 ubiquitin-conjugating enzyme]-L-cysteine + N(6)-ubiquitinyl-[acceptor protein]-L-lysine.. Functionally, has E3 ubiquitin ligase activity towards IGBP1, promoting its monoubiquitination, which results in deprotection of the catalytic subunit of protein phosphatase PP2A, and its subsequent degradation by polyubiquitination. This Homo sapiens (Human) protein is E3 ubiquitin-protein ligase Midline-1 (MID1).